A 1951-amino-acid chain; its full sequence is [F-actin]-monooxygenase MICAL2 (1951 aa).

Residues 2-494 (GENEDEKQAQ…KHLYITKEMD (493 aa)) are monooxygenase domain. FAD-binding positions include Cys97, 116 to 118 (EKR), 123 to 125 (RNN), Phe183, Tyr298, and Asp398. The Calponin-homology (CH) domain occupies 516–619 (DIRPNKLLTW…MVMYLSKFYE (104 aa)). The residue at position 631 (Ser631) is a Phosphoserine. The Nuclear localization signal signature appears at 660–681 (RKRTPRVDTQTEENDMNKRRRQ). Disordered stretches follow at residues 663-712 (TPRV…SQNK) and 891-921 (KRVPHAHPPSPPSCLPSPHPAAASSPPAADS). Over residues 691–700 (SFSSRSLGSS) the composition is skewed to low complexity. Residues 896–909 (AHPPSPPSCLPSPH) are compositionally biased toward pro residues. The segment covering 910-921 (PAAASSPPAADS) has biased composition (low complexity). Positions 991 to 1053 (DTCYFCKKRV…KPHFVHCKTS (63 aa)) constitute an LIM zinc-binding domain. Residues Cys993, Cys996, His1014, Cys1017, Cys1020, Cys1023, Cys1043, and His1046 each contribute to the Zn(2+) site. Thr1052 bears the Phosphoserine mark. Disordered stretches follow at residues 1054–1141 (SKQR…RISP), 1158–1314 (TSED…VSPT), 1348–1368 (VEPGRESLRSPEEISSSEGCQ), 1383–1427 (ILGK…RKLG), 1451–1476 (HKTGEQLSQESAENIRGGSLKPTCSS), 1489–1580 (QKKA…AKKA), 1594–1624 (AQASDLSLPNSILRSRSLPSRPSKMFFSTTP), 1678–1697 (GDFFNSPKEEGPPGNRVPSL), 1706–1731 (STSMGQVAHPSSTGQDARKLEGGEGG), and 1747–1766 (PVTEATSSPTSSSAEEEADS). Residues 1061–1070 (AELNQQREEE) show a composition bias toward basic and acidic residues. 3 stretches are compositionally biased toward polar residues: residues 1129–1138 (PRPSEWTSVR), 1228–1239 (HSLQSPTPSKYQ), and 1246–1256 (QSNSTPMNQRA). A compositionally biased stretch (pro residues) spans 1257 to 1268 (PSPPKEPPPPPS). Residues 1269 to 1285 (LSSSSSLPSSFSSASVP) are compositionally biased toward low complexity. Positions 1291–1306 (DSSSPQVTYNLHSPQI) are enriched in polar residues. The tract at residues 1314–1353 (TPIYLRRARAQGIVKEIPLYLPHSPMLESTEDCLVEPGRE) is interaction with MAPK1. The segment covering 1350-1359 (PGRESLRSPE) has biased composition (basic and acidic residues). The span at 1532 to 1545 (EAGKKTSPKPESKT) shows a compositional bias: basic and acidic residues. Low complexity predominate over residues 1599–1616 (LSLPNSILRSRSLPSRPS). Residues 1678–1688 (GDFFNSPKEEG) are compositionally biased toward basic and acidic residues. Position 1683 is a phosphoserine (Ser1683). Positions 1706–1720 (STSMGQVAHPSSTGQ) are enriched in polar residues. The span at 1749–1759 (TEATSSPTSSS) shows a compositional bias: low complexity. Positions 1789–1939 (KQEELKRLHK…ERTQDQHFEN (151 aa)) constitute a bMERB domain.

This sequence belongs to the Mical family. In terms of assembly, interacts with PLXNA4. Interacts with RAB1B. Interacts with MAPK1/ERK2. Interacts with RAB1B, RAB35, RAB8A, RAB10, RAB13 and RAB15 (in their GTP-bound forms); binding to RAB1B and RAB35 is of low affinity compared to other Rab proteins; binding to RAB1B and RAB35 is of low affinity compared to other Rab proteins; at least in case of RAB8A may bind 2 molecules of RAB8A simultaneously through a high and a low affinity binding site, respectively. Requires FAD as cofactor. In terms of tissue distribution, expressed only in testis (at protein level).

The protein localises to the cytoplasm. It is found in the nucleus. The catalysed reaction is L-methionyl-[F-actin] + NADPH + O2 + H(+) = L-methionyl-(R)-S-oxide-[F-actin] + NADP(+) + H2O. Functionally, methionine monooxygenase that promotes depolymerization of F-actin by mediating oxidation of residues 'Met-44' and 'Met-47' on actin to form methionine-sulfoxide, resulting in actin filament disassembly and preventing repolymerization. Regulates the disassembly of branched actin networks also by oxidizing ARP3B-containing ARP2/3 complexes leading to ARP3B dissociation from the network. Acts as a key regulator of the SRF signaling pathway elicited by nerve growth factor and serum: mediates oxidation and subsequent depolymerization of nuclear actin, leading to increase MKL1/MRTF-A presence in the nucleus and promote SRF:MKL1/MRTF-A-dependent gene transcription. Does not activate SRF:MKL1/MRTF-A through RhoA. This is [F-actin]-monooxygenase MICAL2 from Mus musculus (Mouse).